Here is a 411-residue protein sequence, read N- to C-terminus: Adenylosuccinate synthetase (411 aa).

Residues 11–17 (GDEGKGK) and 39–41 (GHT) contribute to the GTP site. Asp-12 acts as the Proton acceptor in catalysis. Positions 12 and 39 each coordinate Mg(2+). IMP contacts are provided by residues 12–15 (DEGK), 37–40 (NAGH), Thr-121, Arg-135, Gln-215, Thr-230, and Arg-294. His-40 (proton donor) is an active-site residue. 290-296 (TTTKRPR) is a binding site for substrate. GTP contacts are provided by residues Arg-296, 322-324 (KLD), and 400-402 (STS).

It belongs to the adenylosuccinate synthetase family. As to quaternary structure, homodimer. Requires Mg(2+) as cofactor.

The protein localises to the cytoplasm. It carries out the reaction IMP + L-aspartate + GTP = N(6)-(1,2-dicarboxyethyl)-AMP + GDP + phosphate + 2 H(+). It participates in purine metabolism; AMP biosynthesis via de novo pathway; AMP from IMP: step 1/2. Functionally, plays an important role in the de novo pathway of purine nucleotide biosynthesis. Catalyzes the first committed step in the biosynthesis of AMP from IMP. This Helicobacter pylori (strain G27) protein is Adenylosuccinate synthetase.